We begin with the raw amino-acid sequence, 591 residues long: CTP synthase 1 (591 aa).

K100 is subject to N6-acetyllysine. In terms of domain architecture, Glutamine amidotransferase type-1 spans 300–554; that stretch reads SIALVGKYTK…LASVGRLSHY (255 aa). Active-site for GATase activity residues include C399, H526, and E528. A phosphoserine mark is found at S562, S568, S571, S573, S574, S575, S578, and S587. Residues 562 to 591 form a disordered region; it reads SPRDTYSDRSGSSSPDSEITELKFPSINHD. Positions 569 to 578 are enriched in low complexity; it reads DRSGSSSPDS.

It belongs to the CTP synthase family. Widely expressed.

The protein resides in the cytoplasm. The protein localises to the cytosol. It carries out the reaction UTP + L-glutamine + ATP + H2O = CTP + L-glutamate + ADP + phosphate + 2 H(+). It functions in the pathway pyrimidine metabolism; CTP biosynthesis via de novo pathway; CTP from UDP: step 2/2. With respect to regulation, activated by GTP and inhibited by CTP. In terms of biological role, this enzyme is involved in the de novo synthesis of CTP, a precursor of DNA, RNA and phospholipids. Catalyzes the ATP-dependent amination of UTP to CTP with either L-glutamine or ammonia as a source of nitrogen. This enzyme and its product, CTP, play a crucial role in the proliferation of activated lymphocytes and therefore in immunity. In Homo sapiens (Human), this protein is CTP synthase 1.